The primary structure comprises 7094 residues: Replicase polyprotein 1ab (7094 aa).

The 143-residue stretch at Pro-54–Gly-196 folds into the CoV Nsp1 globular domain. A BetaCoV Nsp1 C-terminal domain is found at Phe-216–Gly-246. Residues Leu-250–Tyr-519 enclose the CoV Nsp2 N-terminal domain. Zn(2+) contacts are provided by Cys-392, Cys-397, Cys-413, and Cys-416. Residues Cys-392–Cys-416 form a C4 region. Residues Cys-524–Val-713 enclose the CoV Nsp2 middle domain. The CoV Nsp2 C-terminal domain occupies Arg-733 to Ala-851. In terms of domain architecture, Ubiquitin-like 1 spans Arg-853–Asp-966. A Peptidase C16 1 domain is found at Asp-1036–Thr-1274. Catalysis depends on Cys-1074, which acts as the For PL1-PRO activity. 4 residues coordinate Zn(2+): Cys-1151, Cys-1154, Cys-1177, and Cys-1179. The segment at Cys-1151–Cys-1179 adopts a C4-type 1 zinc-finger fold. Residues His-1225 and Asp-1236 each act as for PL1-PRO activity in the active site. One can recognise a Macro domain in the interval Pro-1275–Val-1435. One can recognise a DPUP domain in the interval Asp-1491–Asp-1563. In terms of domain architecture, Ubiquitin-like 2 spans Leu-1562–Gln-1617. Positions Ser-1631–Gln-1892 constitute a Peptidase C16 2 domain. Residue Cys-1671 is the For PL2-PRO activity of the active site. Zn(2+) is bound by residues Cys-1749, Cys-1751, Cys-1783, and Cys-1785. Residues Cys-1749–Cys-1785 form a C4-type 2 zinc finger. Catalysis depends on for PL2-PRO activity residues His-1828 and Asp-1842. A Nucleic acid-binding domain is found at Ile-1906–Asp-2007. One can recognise a G2M domain in the interval Asp-2020–Glu-2169. Transmembrane regions (helical) follow at residues Ile-2138–Ile-2158, Ala-2199–Phe-2219, and Ile-2227–Leu-2247. The interval Ile-2138 to Phe-2385 is HD1. The 62-residue stretch at Gly-2235–Asp-2296 folds into the 3Ecto domain. 2 disulfide bridges follow: Cys-2251/Cys-2275 and Cys-2266/Cys-2272. The next 3 membrane-spanning stretches (helical) occupy residues Leu-2313–Ile-2333, Leu-2343–Leu-2363, and Ala-2365–Phe-2385. The segment at Ile-2383–Asp-2473 is Y1. Positions Ile-2383–Gly-2750 constitute a CoV Nsp3 Y domain. Residues His-2387, Cys-2392, Cys-2397, Cys-2400, Cys-2433, His-2436, Cys-2440, and Cys-2443 each contribute to the Zn(2+) site. The interval His-2387 to Cys-2400 is ZF1. A ZF2 region spans residues Cys-2433–Cys-2443. Positions Val-2474–Ala-2566 are Y2. The interval Val-2474–Gly-2750 is coV-Y. A Y3 region spans residues Asn-2567–Gly-2649. Residues Leu-2650–Gly-2750 are Y4. 7 helical membrane passes run Val-2752–Trp-2772, Ser-2824–Val-2844, Val-3009–Leu-3029, Ala-3031–Ile-3051, Ile-3063–Val-3083, Val-3090–Met-3110, and Leu-3115–Val-3135. The tract at residues Val-2752–Val-3135 is HD2. One can recognise a Nsp4C domain in the interval Leu-3149 to Gln-3246. Residues Ser-3247–Gln-3549 enclose the Peptidase C30 domain. Catalysis depends on for 3CL-PRO activity residues His-3287 and Cys-3391. A run of 7 helical transmembrane segments spans residues Gly-3558–Val-3578, Thr-3588–Val-3608, Tyr-3614–Val-3634, Thr-3657–Leu-3677, Leu-3684–Gly-3704, Ile-3711–Ala-3731, and Ile-3755–Ser-3775. Positions Gly-3558–Ser-3775 are HD3. One can recognise a RdRp Nsp7 cofactor domain in the interval Ser-3837–Gln-3925. The RdRp Nsp8 cofactor domain occupies Ala-3926–Gln-4122. The region spanning Asn-4123–Gln-4232 is the Nsp9 ssRNA-binding domain. Positions Ala-4233–Ser-4370 constitute an ExoN/MTase coactivator domain. Zn(2+)-binding residues include Cys-4306, Cys-4309, His-4315, Cys-4322, Cys-4348, Cys-4351, Cys-4359, and Cys-4361. 2 zinc fingers span residues Cys-4306–Cys-4322 and Cys-4348–Cys-4361. In terms of domain architecture, NiRAN spans Phe-4375–Tyr-4630. Mn(2+) contacts are provided by Asn-4578 and Asp-4587. Residues Arg-4631–Tyr-4729 enclose the Nsp12 Interface domain. Zn(2+) is bound by residues His-4660, Cys-4666, Cys-4671, Cys-4675, and Cys-4852. In terms of domain architecture, Nsp12 RNA-dependent RNA polymerase spans Arg-4730–Gln-5297. The segment at Ser-4732–Ala-4946 is rdRp Fingers N-ter. A rdRp Palm N-ter region spans residues Thr-4947 to Pro-4985. Residues Pro-4977–Gly-5139 enclose the RdRp catalytic domain. Positions Lys-4986 to Gly-5044 are rdRp Fingers C-ter. Zn(2+) is bound by residues His-5007, Cys-5010, and Cys-5011. The rdRp Palm C-ter stretch occupies residues Thr-5045–Gln-5180. Residues Ser-5124, Asp-5125, and Asp-5126 contribute to the active site. Residues His-5181–Gln-5297 form a rdRp Thumb region. The CV ZBD domain maps to Ser-5298 to Lys-5410. Zn(2+) contacts are provided by Cys-5302, Cys-5305, Cys-5313, Cys-5316, Cys-5323, Cys-5326, His-5330, His-5336, Cys-5347, Cys-5352, Cys-5369, and His-5372. The (+)RNA virus helicase ATP-binding domain occupies Ser-5553–Leu-5734. Gly-5578–Ser-5585 contributes to the ATP binding site. The region spanning Gly-5735–Asn-5904 is the (+)RNA virus helicase C-terminal domain. The ExoN domain occupies Leu-5971–Cys-6186. Active-site residues include Asp-5989, Glu-5991, and Glu-6090. Residues Cys-6106, Cys-6109, Cys-6125, His-6128, His-6156, Cys-6160, and His-6163 each contribute to the Zn(2+) site. Catalysis depends on residues His-6167 and Asp-6172. Residue Cys-6178 participates in Zn(2+) binding. The N7-MTase domain occupies Tyr-6195–Gln-6421. S-adenosyl-L-methionine is bound at residue Asp-6230–Ala-6236. The interval Cys-6308–Thr-6322 is gpppA-binding. Residues Cys-6346, Cys-6367, Cys-6378, and His-6381 each contribute to the Zn(2+) site. The region spanning Ser-6422–Arg-6482 is the Nsp15 N-terminal oligomerization domain. Positions Ser-6483 to Val-6603 constitute an AV-Nsp11N/CoV-Nsp15M domain. The 140-residue stretch at Thr-6653–Pro-6792 folds into the NendoU domain. Active-site residues include His-6683, His-6698, Lys-6738, Lys-6841, Asp-6925, Lys-6965, and Glu-6998. A Nidovirus-type SAM-dependent 2'-O-MTase domain is found at Ala-6797–Val-7091.

The protein belongs to the coronaviruses polyprotein 1ab family. In terms of assembly, interacts with host PHB and PHB2. As to quaternary structure, interacts with papain-like protease nsp3 and non-structural protein 6. Monomer. Homodimer. Only the homodimer shows catalytic activity. In terms of assembly, interacts with nsp8 and nsp12 to form the replication-transcription complex (RTC): nsp12, nsp7, two subunits of nsp8, and up to two subunits of nsp13. As to quaternary structure, interacts with nsp7, nsp13 and nsp12 to form the replication-transcription complex (RTC): nsp12, nsp7, two subunits of nsp8, and up to two subunits of nsp13. Interacts with nsp12. In terms of assembly, interacts with proofreading exoribonuclease nsp14 and 2'-O-methyltransferase nsp16; these interactions enhance nsp14 and nsp16 enzymatic activities. As to quaternary structure, interacts with nsp7 and nsp8 to form the replication-transcription complex (RTC): nsp12, nsp7, two subunits of nsp8, and up to two subunits of nsp13. Interacts with nsp9. Interacts with nsp8 to form the replication-transcription complex (RTC): nsp12, nsp7, two subunits of nsp8, and up to two subunits of nsp13. Mn(2+) is required as a cofactor. Requires Mg(2+) as cofactor. Post-translationally, specific enzymatic cleavages in vivo by its own proteases yield mature proteins. 3CL-PRO and PL-PRO proteinases are autocatalytically processed.

The protein localises to the host membrane. It is found in the host cytoplasm. It localises to the host perinuclear region. The protein resides in the host endoplasmic reticulum-Golgi intermediate compartment. It catalyses the reaction RNA(n) + a ribonucleoside 5'-triphosphate = RNA(n+1) + diphosphate. The enzyme catalyses ATP + H2O = ADP + phosphate + H(+). It carries out the reaction Thiol-dependent hydrolysis of ester, thioester, amide, peptide and isopeptide bonds formed by the C-terminal Gly of ubiquitin (a 76-residue protein attached to proteins as an intracellular targeting signal).. The catalysed reaction is a 5'-end (N(7)-methyl 5'-triphosphoguanosine)-ribonucleoside in mRNA + S-adenosyl-L-methionine = a 5'-end (N(7)-methyl 5'-triphosphoguanosine)-(2'-O-methyl-ribonucleoside) in mRNA + S-adenosyl-L-homocysteine + H(+). It catalyses the reaction uridylyl-uridylyl-ribonucleotide-RNA = a 3'-end uridylyl-2',3'-cyclophospho-uridine-RNA + a 5'-end dephospho-ribonucleoside-RNA. The enzyme catalyses a 5'-end diphospho-ribonucleoside in mRNA + GTP + H(+) = a 5'-end (5'-triphosphoguanosine)-ribonucleoside in mRNA + diphosphate. It carries out the reaction a 5'-end (5'-triphosphoguanosine)-ribonucleoside in mRNA + S-adenosyl-L-methionine = a 5'-end (N(7)-methyl 5'-triphosphoguanosine)-ribonucleoside in mRNA + S-adenosyl-L-homocysteine. Its function is as follows. The replicase polyprotein of coronaviruses is a multifunctional protein: it contains the activities necessary for the transcription of negative stranded RNA, leader RNA, subgenomic mRNAs and progeny virion RNA as well as proteinases responsible for the cleavage of the polyprotein into functional products. In terms of biological role, inhibits host translation by interacting with the 40S ribosomal subunit. The nsp1-40S ribosome complex further induces an endonucleolytic cleavage near the 5'UTR of host mRNAs, targeting them for degradation. Viral mRNAs are not susceptible to nsp1-mediated endonucleolytic RNA cleavage thanks to the presence of a 5'-end leader sequence and are therefore protected from degradation. By suppressing host gene expression, nsp1 facilitates efficient viral gene expression in infected cells and evasion from host immune response. Functionally, may play a role in the modulation of host cell survival signaling pathway by interacting with host PHB and PHB2. Indeed, these two proteins play a role in maintaining the functional integrity of the mitochondria and protecting cells from various stresses. Responsible for the cleavages located at the N-terminus of the replicase polyprotein. In addition, PL-PRO possesses a deubiquitinating/deISGylating activity and processes both 'Lys-48'- and 'Lys-63'-linked polyubiquitin chains from cellular substrates. Participates together with nsp4 in the assembly of virally-induced cytoplasmic double-membrane vesicles necessary for viral replication. Antagonizes innate immune induction of type I interferon by blocking the phosphorylation, dimerization and subsequent nuclear translocation of host IRF3. Also prevents host NF-kappa-B signaling. Its function is as follows. Participates in the assembly of virally-induced cytoplasmic double-membrane vesicles necessary for viral replication. In terms of biological role, cleaves the C-terminus of replicase polyprotein at 11 sites. Recognizes substrates containing the core sequence [ILMVF]-Q-|-[SGACN]. Also able to bind an ADP-ribose-1''-phosphate (ADRP). Functionally, plays a role in the initial induction of autophagosomes from host endoplasmic reticulum. Later, limits the expansion of these phagosomes that are no longer able to deliver viral components to lysosomes. Forms a hexadecamer with nsp8 (8 subunits of each) that may participate in viral replication by acting as a primase. Alternatively, may synthesize substantially longer products than oligonucleotide primers. Its function is as follows. Forms a hexadecamer with nsp7 (8 subunits of each) that may participate in viral replication by acting as a primase. Alternatively, may synthesize substantially longer products than oligonucleotide primers. In terms of biological role, forms a primer, NSP9-pU, which is utilized by the polymerase for the initiation of RNA chains. Interacts with ribosome signal recognition particle RNA (SRP). Together with NSP8, suppress protein integration into the cell membrane, thereby disrupting host immune defenses. Functionally, plays a pivotal role in viral transcription by stimulating both nsp14 3'-5' exoribonuclease and nsp16 2'-O-methyltransferase activities. Therefore plays an essential role in viral mRNAs cap methylation. RNA-directed RNA polymerase that catalyzes the transcription of viral genomic and subgenomic RNAs. Acts in complex with nsp7 and nsp8 to transcribe both the minus and positive strands of genomic RNA. The kinase-like NiRAN domain of NSP12 attaches one or more nucleotides to the amino terminus of NSP9, forming a covalent RNA-protein intermediate that serves as transcription/replication primer. Subgenomic RNAs (sgRNAs) are formed by discontinuous transcription: The polymerase has the ability to pause at transcription-regulating sequences (TRS) and jump to the leader TRS, resulting in a major deletion. This creates a series of subgenomic RNAs that are replicated, transcribed and translated. In addition, Nsp12 is a subunit of the viral RNA capping enzyme that catalyzes the RNA guanylyltransferase reaction for genomic and sub-genomic RNAs. Subsequently, the NiRAN domain transfers RNA to GDP, and forms the core cap structure GpppA-RNA. Its function is as follows. Multi-functional protein with a zinc-binding domain in N-terminus displaying RNA and DNA duplex-unwinding activities with 5' to 3' polarity. Activity of helicase is dependent on magnesium. In terms of biological role, plays a role in viral RNA synthesis through two distinct activities. The N7-guanine methyltransferase activity plays a role in the formation of the cap structure GpppA-RNA. The proofreading exoribonuclease reduces the sensitivity of the virus to RNA mutagens during replication. This activity acts on both ssRNA and dsRNA in a 3'-5' direction. Functionally, plays a role in viral transcription/replication and prevents the simultaneous activation of host cell dsRNA sensors, such as MDA5/IFIH1, OAS, and PKR. Acts by degrading the 5'-polyuridines generated during replication of the poly(A) region of viral genomic and subgenomic RNAs. Catalyzes a two-step reaction in which a 2'3'-cyclic phosphate (2'3'-cP) is first generated by 2'-O transesterification, which is then hydrolyzed to a 3'-phosphate (3'-P). If not degraded, poly(U) RNA would hybridize with poly(A) RNA tails and activate host dsRNA sensors. Methyltransferase that mediates mRNA cap 2'-O-ribose methylation to the 5'-cap structure of viral mRNAs. N7-methyl guanosine cap is a prerequisite for binding of nsp16. Therefore plays an essential role in viral mRNAs cap methylation which is essential to evade immune system. The sequence is that of Replicase polyprotein 1ab (rep) from Bos taurus (Bovine).